We begin with the raw amino-acid sequence, 104 residues long: Large ribosomal subunit protein uL24 (104 aa).

Belongs to the universal ribosomal protein uL24 family. In terms of assembly, part of the 50S ribosomal subunit.

In terms of biological role, one of two assembly initiator proteins, it binds directly to the 5'-end of the 23S rRNA, where it nucleates assembly of the 50S subunit. One of the proteins that surrounds the polypeptide exit tunnel on the outside of the subunit. The chain is Large ribosomal subunit protein uL24 from Sodalis glossinidius (strain morsitans).